Reading from the N-terminus, the 386-residue chain is Succinate--CoA ligase [ADP-forming] subunit beta (386 aa).

The 236-residue stretch at 9–244 (KAVLRSYGVS…LDEEDSKEIE (236 aa)) folds into the ATP-grasp domain. ATP is bound by residues lysine 46, 53 to 55 (GRG), glutamate 99, cysteine 102, and glutamate 107. 2 residues coordinate Mg(2+): asparagine 199 and aspartate 213. Substrate contacts are provided by residues asparagine 264 and 321 to 323 (GIM).

Belongs to the succinate/malate CoA ligase beta subunit family. Heterotetramer of two alpha and two beta subunits. It depends on Mg(2+) as a cofactor.

The enzyme catalyses succinate + ATP + CoA = succinyl-CoA + ADP + phosphate. It carries out the reaction GTP + succinate + CoA = succinyl-CoA + GDP + phosphate. The protein operates within carbohydrate metabolism; tricarboxylic acid cycle; succinate from succinyl-CoA (ligase route): step 1/1. Its function is as follows. Succinyl-CoA synthetase functions in the citric acid cycle (TCA), coupling the hydrolysis of succinyl-CoA to the synthesis of either ATP or GTP and thus represents the only step of substrate-level phosphorylation in the TCA. The beta subunit provides nucleotide specificity of the enzyme and binds the substrate succinate, while the binding sites for coenzyme A and phosphate are found in the alpha subunit. The chain is Succinate--CoA ligase [ADP-forming] subunit beta from Bacillus cereus (strain G9842).